The following is a 426-amino-acid chain: Dihydroorotase (426 aa).

Zn(2+) contacts are provided by His58 and His60. Substrate-binding positions include 60 to 62 (HLR) and Asn92. Zn(2+)-binding residues include Asp150, His177, and His230. Asn276 lines the substrate pocket. Asp303 is a Zn(2+) binding site. The active site involves Asp303. Residues His307 and 321–322 (FG) each bind substrate.

It belongs to the metallo-dependent hydrolases superfamily. DHOase family. Class I DHOase subfamily. Zn(2+) is required as a cofactor.

It carries out the reaction (S)-dihydroorotate + H2O = N-carbamoyl-L-aspartate + H(+). It functions in the pathway pyrimidine metabolism; UMP biosynthesis via de novo pathway; (S)-dihydroorotate from bicarbonate: step 3/3. In terms of biological role, catalyzes the reversible cyclization of carbamoyl aspartate to dihydroorotate. The polypeptide is Dihydroorotase (Listeria monocytogenes serotype 4b (strain F2365)).